We begin with the raw amino-acid sequence, 204 residues long: Methylthioribulose-1-phosphate dehydratase (204 aa).

His-94 and His-96 together coordinate Zn(2+).

It belongs to the aldolase class II family. MtnB subfamily. Zn(2+) serves as cofactor.

It carries out the reaction 5-(methylsulfanyl)-D-ribulose 1-phosphate = 5-methylsulfanyl-2,3-dioxopentyl phosphate + H2O. It functions in the pathway amino-acid biosynthesis; L-methionine biosynthesis via salvage pathway; L-methionine from S-methyl-5-thio-alpha-D-ribose 1-phosphate: step 2/6. Catalyzes the dehydration of methylthioribulose-1-phosphate (MTRu-1-P) into 2,3-diketo-5-methylthiopentyl-1-phosphate (DK-MTP-1-P). The sequence is that of Methylthioribulose-1-phosphate dehydratase from Pseudomonas savastanoi pv. phaseolicola (strain 1448A / Race 6) (Pseudomonas syringae pv. phaseolicola (strain 1448A / Race 6)).